Reading from the N-terminus, the 341-residue chain is Ribosomal RNA small subunit methyltransferase C (341 aa).

Belongs to the methyltransferase superfamily. RsmC family. Monomer.

The protein resides in the cytoplasm. It catalyses the reaction guanosine(1207) in 16S rRNA + S-adenosyl-L-methionine = N(2)-methylguanosine(1207) in 16S rRNA + S-adenosyl-L-homocysteine + H(+). Functionally, specifically methylates the guanine in position 1207 of 16S rRNA in the 30S particle. This is Ribosomal RNA small subunit methyltransferase C from Pseudoalteromonas translucida (strain TAC 125).